We begin with the raw amino-acid sequence, 288 residues long: Transmembrane and coiled-coil domain-containing protein 5A (288 aa).

A coiled-coil region spans residues 10 to 189; sequence KKNIISLNMD…ELETGYLERE (180 aa). Residues 227 to 249 form a helical membrane-spanning segment; sequence SLLFSTLFFIRLLGYLIFHLSFI.

Belongs to the TMCO5 family. As to expression, only detected in testis (at protein level).

The protein localises to the endoplasmic reticulum membrane. The protein resides in the nucleus membrane. This chain is Transmembrane and coiled-coil domain-containing protein 5A (Tmco5a), found in Mus musculus (Mouse).